Reading from the N-terminus, the 320-residue chain is 3-oxoacyl-[acyl-carrier-protein] reductase 1, chloroplastic (320 aa).

The transit peptide at 1-60 directs the protein to the chloroplast; the sequence is MATTVAATKLTSLKAVKKLGFREIRQVRQWSPLQSAMPHFGMLRCGSRQSFATSTVVKAQ. Residue 82 to 106 participates in NADP(+) binding; that stretch reads VTGASRGIGKAIALSLGKAGCKVLV. Serine 214 is a substrate binding site. Tyrosine 227 functions as the Proton acceptor in the catalytic mechanism.

This sequence belongs to the short-chain dehydrogenases/reductases (SDR) family. Homotetramer.

The protein localises to the plastid. It localises to the chloroplast. The enzyme catalyses a (3R)-hydroxyacyl-[ACP] + NADP(+) = a 3-oxoacyl-[ACP] + NADPH + H(+). Its pathway is lipid metabolism; fatty acid biosynthesis. In Brassica napus (Rape), this protein is 3-oxoacyl-[acyl-carrier-protein] reductase 1, chloroplastic (gbkr1).